The following is a 298-amino-acid chain: Anamorsin homolog (298 aa).

Residues 1–143 (MTQLIITYQS…IKAEKPSWKP (143 aa)) form an N-terminal SAM-like domain region. The segment at 143–162 (PEEGKVLVDDIDLEGSVPDI) is linker. 4 residues coordinate [2Fe-2S] cluster: cysteine 175, cysteine 182, cysteine 185, and cysteine 187. The tract at residues 175 to 187 (CKSKERACNNCNC) is fe-S binding site A. Residues cysteine 218, cysteine 221, cysteine 229, and cysteine 232 each contribute to the [4Fe-4S] cluster site. 2 consecutive short sequence motifs (cx2C motif) follow at residues 218 to 221 (CGNC) and 229 to 232 (CSGC). The fe-S binding site B stretch occupies residues 218-232 (CGNCYLGDAFRCSGC).

The protein belongs to the anamorsin family. Monomer. [2Fe-2S] cluster serves as cofactor. It depends on [4Fe-4S] cluster as a cofactor.

The protein localises to the cytoplasm. The protein resides in the mitochondrion intermembrane space. In terms of biological role, component of the cytosolic iron-sulfur (Fe-S) protein assembly (CIA) machinery. Required for the maturation of extramitochondrial Fe-S proteins. Part of an electron transfer chain functioning in an early step of cytosolic Fe-S biogenesis, facilitating the de novo assembly of a [4Fe-4S] cluster on the cytosolic Fe-S scaffold complex. Electrons are transferred from NADPH via a FAD- and FMN-containing diflavin oxidoreductase. Together with the diflavin oxidoreductase, also required for the assembly of the diferric tyrosyl radical cofactor of ribonucleotide reductase (RNR), probably by providing electrons for reduction during radical cofactor maturation in the catalytic small subunit. This Cryptosporidium hominis protein is Anamorsin homolog.